Here is a 142-residue protein sequence, read N- to C-terminus: Large ribosomal subunit protein uL13 (142 aa).

The protein belongs to the universal ribosomal protein uL13 family. As to quaternary structure, part of the 50S ribosomal subunit.

In terms of biological role, this protein is one of the early assembly proteins of the 50S ribosomal subunit, although it is not seen to bind rRNA by itself. It is important during the early stages of 50S assembly. This is Large ribosomal subunit protein uL13 from Treponema denticola (strain ATCC 35405 / DSM 14222 / CIP 103919 / JCM 8153 / KCTC 15104).